The sequence spans 248 residues: Aspartate/glutamate leucyltransferase (248 aa).

Belongs to the R-transferase family. Bpt subfamily.

It localises to the cytoplasm. It catalyses the reaction N-terminal L-glutamyl-[protein] + L-leucyl-tRNA(Leu) = N-terminal L-leucyl-L-glutamyl-[protein] + tRNA(Leu) + H(+). The enzyme catalyses N-terminal L-aspartyl-[protein] + L-leucyl-tRNA(Leu) = N-terminal L-leucyl-L-aspartyl-[protein] + tRNA(Leu) + H(+). In terms of biological role, functions in the N-end rule pathway of protein degradation where it conjugates Leu from its aminoacyl-tRNA to the N-termini of proteins containing an N-terminal aspartate or glutamate. The protein is Aspartate/glutamate leucyltransferase of Methylorubrum extorquens (strain PA1) (Methylobacterium extorquens).